The sequence spans 276 residues: Inositol-1-monophosphatase ImpA (276 aa).

Glu-74, Asp-90, Ile-92, and Asp-93 together coordinate Mg(2+). Residue Glu-74 coordinates substrate. Substrate is bound by residues Ile-92–Thr-95, Arg-192, and Asp-221. Position 221 (Asp-221) interacts with Mg(2+).

This sequence belongs to the inositol monophosphatase superfamily. Requires Mg(2+) as cofactor.

The catalysed reaction is a myo-inositol phosphate + H2O = myo-inositol + phosphate. It functions in the pathway polyol metabolism; myo-inositol biosynthesis; myo-inositol from D-glucose 6-phosphate: step 2/2. Its function is as follows. Catalyzes the dephosphorylation of inositol 1-phosphate (I-1-P) to yield free myo-inositol, a key metabolite in mycobacteria. This Mycolicibacterium smegmatis (strain ATCC 700084 / mc(2)155) (Mycobacterium smegmatis) protein is Inositol-1-monophosphatase ImpA (impA).